Here is a 92-residue protein sequence, read N- to C-terminus: Bombyxin A-4 (92 aa).

Residues 1-19 (MKILLAIALMLSTVMWVST) form the signal peptide. Q20 carries the pyrrolidone carboxylic acid modification. Disulfide bonds link C29/C79, C41/C92, and C78/C83. Residues 50–70 (SGAQFASYGSAWLMPYSEGRG) constitute a propeptide, c peptide like.

This sequence belongs to the insulin family. In terms of assembly, heterodimer of a B chain and an A chain linked by two disulfide bonds.

It is found in the secreted. Its function is as follows. Brain peptide responsible for activation of prothoracic glands to produce ecdysone in insects. The polypeptide is Bombyxin A-4 (BBXA4) (Bombyx mori (Silk moth)).